Reading from the N-terminus, the 201-residue chain is MICOS complex subunit MIC27 (201 aa).

The transit peptide at 1-31 directs the protein to the mitochondrion; it reads MTQDKPIVETISNAGEQVTNVFGQFWQLVTS. Topologically, residues 32-117 are cytoplasmic; it reads KNTTNNGDSK…KCNAYLTEEW (86 aa). The helical transmembrane segment at 118-138 threads the bilayer; that stretch reads TALPKAAAITVGGMAGFVLGL. Residues 139–145 lie on the Mitochondrial intermembrane side of the membrane; the sequence is KRGPVGR. Residues 146–166 traverse the membrane as a helical segment; the sequence is LLTTTIGLATMAAFCYPIEAV. Residues 167-201 lie on the Cytoplasmic side of the membrane; the sequence is DVAKTGRAHAEQTWYSFQESPTPSAIVKTNLSPPK.

It belongs to the apolipoprotein O/MICOS complex subunit Mic27 family. In terms of assembly, component of the mitochondrial contact site and cristae organizing system (MICOS) complex.

The protein resides in the mitochondrion outer membrane. In terms of biological role, sustains mitochondrial morphology probably through maintaining cristae morphology. May act as a component of the MICOS complex, a large protein complex of the mitochondria. The polypeptide is MICOS complex subunit MIC27 (Caenorhabditis elegans).